The following is a 318-amino-acid chain: Guanidinopropionase (318 aa).

Mn(2+) is bound by residues His-126, Asp-148, His-150, Asp-152, Asp-240, and Asp-242.

Belongs to the arginase family. Agmatinase subfamily. In terms of assembly, homohexamer. It depends on Mn(2+) as a cofactor.

It carries out the reaction 3-guanidinopropanoate + H2O = urea + beta-alanine. Functionally, catalyzes the hydrolysis of 3-guanidinopropanoate to beta-alanine and urea. Possesses low activity against 4-guanidinobutanoate. Has no activity against arginine and agmatine. The chain is Guanidinopropionase (gpuA) from Pseudomonas aeruginosa (strain ATCC 15692 / DSM 22644 / CIP 104116 / JCM 14847 / LMG 12228 / 1C / PRS 101 / PAO1).